Here is a 265-residue protein sequence, read N- to C-terminus: Protein Pars_0096 (265 aa).

Belongs to the CinA family.

The sequence is that of Protein Pars_0096 from Pyrobaculum arsenaticum (strain DSM 13514 / JCM 11321 / PZ6).